Here is a 210-residue protein sequence, read N- to C-terminus: High mobility group protein B2 (210 aa).

N6-acetyllysine is present on Lys3. The HMG box 1 DNA-binding region spans 9 to 79; sequence PRGKMSSYAF…RYDREMKNYV (71 aa). Cys23 carries the post-translational modification Cysteine sulfonic acid (-SO3H); alternate. An intrachain disulfide couples Cys23 to Cys45. Position 30 is an N6-acetyllysine (Lys30). Ser35 is subject to Phosphoserine. Lys43 is subject to N6-acetyllysine. Cys45 is modified (cysteine sulfonic acid (-SO3H); alternate). Residues 51 to 76 are compositionally biased toward basic and acidic residues; it reads TMSAKEKSKFEDLAKSDKARYDREMK. A disordered region spans residues 51 to 102; sequence TMSAKEKSKFEDLAKSDKARYDREMKNYVPPKGDKKGKKKDPNAPKRPPSAF. Lys90 bears the N6-acetyllysine mark. A DNA-binding region (HMG box 2) is located at residues 95 to 163; it reads PKRPPSAFFL…KYEKDIAAYR (69 aa). Ser100 bears the Phosphoserine mark. A Cysteine sulfonic acid (-SO3H) modification is found at Cys106. N6-acetyllysine occurs at positions 114 and 141. Residues 162–172 show a composition bias toward basic and acidic residues; the sequence is YRAKGKSEVGK. A disordered region spans residues 162 to 210; that stretch reads YRAKGKSEVGKKGPGRPTGSKKKNEPEDEEEEEEEEDDEDEEEEDEDEE. The interval 165–180 is required for chemotactic activity; it reads KGKSEVGKKGPGRPTG. Positions 187 to 210 are enriched in acidic residues; sequence PEDEEEEEEEEDDEDEEEEDEDEE.

This sequence belongs to the HMGB family. Interacts with POU2F2, POU2F1 and POU3F1. Component of the RAG complex composed of core components RAG1 and RAG2, and associated component HMGB1 or HMGB2. Component of the SET complex, composed of at least ANP32A, APEX1, HMGB2, NME1, SET and TREX1. Directly interacts with SET. Interacts with LEF1. In terms of processing, reduction/oxidation of cysteine residues Cys-23, Cys-45 and Cys-106 and a possible intramolecular disulfide bond involving Cys-23 and Cys-45 give rise to different redox forms with specific functional activities in various cellular compartments: 1- fully reduced HMGB2 (HMGB2C23hC45hC106h), 2- disulfide HMGB2 (HMGB2C23-C45C106h) and 3- sulfonyl HMGB2 (HMGB2C23soC45soC106so).

It is found in the nucleus. The protein resides in the chromosome. Its subcellular location is the cytoplasm. It localises to the secreted. Functionally, multifunctional protein with various roles in different cellular compartments. May act in a redox sensitive manner. In the nucleus is an abundant chromatin-associated non-histone protein involved in transcription, chromatin remodeling and V(D)J recombination and probably other processes. Binds DNA with a preference to non-canonical DNA structures such as single-stranded DNA. Can bent DNA and enhance DNA flexibility by looping thus providing a mechanism to promote activities on various gene promoters by enhancing transcription factor binding and/or bringing distant regulatory sequences into close proximity. Involved in V(D)J recombination by acting as a cofactor of the RAG complex: acts by stimulating cleavage and RAG protein binding at the 23 bp spacer of conserved recombination signal sequences (RSS). Proposed to be involved in the innate immune response to nucleic acids by acting as a cytoplasmic promiscuous immunogenic DNA/RNA sensor which cooperates with subsequent discriminative sensing by specific pattern recognition receptors. In the extracellular compartment acts as a chemokine. Promotes proliferation and migration of endothelial cells implicating AGER/RAGE. Has antimicrobial activity in gastrointestinal epithelial tissues. Involved in inflammatory response to antigenic stimulus coupled with pro-inflammatory activity. May play a role in germ cell differentiation. Involved in modulation of neurogenesis probably by regulation of neural stem proliferation. Involved in articular cartilage surface maintenance implicating LEF1 and the Wnt/beta-catenin pathway. The protein is High mobility group protein B2 (Hmgb2) of Rattus norvegicus (Rat).